We begin with the raw amino-acid sequence, 150 residues long: MRKIVAGKLHGIHVTEANLDYHGSITLDPDHCEEAGILPMEFVEIWNKNSGARISTYVILGERGSRCCILNGAAARTCQPGDQIIVCNSIYLDEAHITSLKPRIVTFDQDNNILDRLSYSVDLDPDGRYCFSILDEADEALAIPALVSGA.

Residue Ser-24 is the Schiff-base intermediate with substrate; via pyruvic acid of the active site. Ser-24 is modified (pyruvic acid (Ser)). Thr-56 is a substrate binding site. Residue Tyr-57 is the Proton donor of the active site. 72 to 74 is a substrate binding site; the sequence is GAA.

Belongs to the PanD family. Heterooctamer of four alpha and four beta subunits. Pyruvate is required as a cofactor. In terms of processing, is synthesized initially as an inactive proenzyme, which is activated by self-cleavage at a specific serine bond to produce a beta-subunit with a hydroxyl group at its C-terminus and an alpha-subunit with a pyruvoyl group at its N-terminus.

Its subcellular location is the cytoplasm. The catalysed reaction is L-aspartate + H(+) = beta-alanine + CO2. The protein operates within cofactor biosynthesis; (R)-pantothenate biosynthesis; beta-alanine from L-aspartate: step 1/1. Its function is as follows. Catalyzes the pyruvoyl-dependent decarboxylation of aspartate to produce beta-alanine. The chain is Aspartate 1-decarboxylase 2 from Mesorhizobium japonicum (strain LMG 29417 / CECT 9101 / MAFF 303099) (Mesorhizobium loti (strain MAFF 303099)).